A 449-amino-acid polypeptide reads, in one-letter code: tRNA modification GTPase MnmE (449 aa).

Positions 24, 85, and 124 each coordinate (6S)-5-formyl-5,6,7,8-tetrahydrofolate. The TrmE-type G domain occupies 220–369 (GIRTAIAGPP…LEEAIIQAFS (150 aa)). Asparagine 230 provides a ligand contact to K(+). Residues 230–235 (NVGKSS), 249–255 (SNIAGTT), and 274–277 (DTAG) each bind GTP. Residue serine 234 coordinates Mg(2+). K(+) contacts are provided by serine 249, isoleucine 251, and threonine 254. Residue threonine 255 coordinates Mg(2+). (6S)-5-formyl-5,6,7,8-tetrahydrofolate is bound at residue lysine 449.

Belongs to the TRAFAC class TrmE-Era-EngA-EngB-Septin-like GTPase superfamily. TrmE GTPase family. As to quaternary structure, homodimer. Heterotetramer of two MnmE and two MnmG subunits. Requires K(+) as cofactor.

It localises to the cytoplasm. Its function is as follows. Exhibits a very high intrinsic GTPase hydrolysis rate. Involved in the addition of a carboxymethylaminomethyl (cmnm) group at the wobble position (U34) of certain tRNAs, forming tRNA-cmnm(5)s(2)U34. The polypeptide is tRNA modification GTPase MnmE (Akkermansia muciniphila (strain ATCC BAA-835 / DSM 22959 / JCM 33894 / BCRC 81048 / CCUG 64013 / CIP 107961 / Muc)).